The chain runs to 78 residues: Exodeoxyribonuclease 7 small subunit (78 aa).

This sequence belongs to the XseB family. In terms of assembly, heterooligomer composed of large and small subunits.

It is found in the cytoplasm. It carries out the reaction Exonucleolytic cleavage in either 5'- to 3'- or 3'- to 5'-direction to yield nucleoside 5'-phosphates.. Bidirectionally degrades single-stranded DNA into large acid-insoluble oligonucleotides, which are then degraded further into small acid-soluble oligonucleotides. This Pediococcus pentosaceus (strain ATCC 25745 / CCUG 21536 / LMG 10740 / 183-1w) protein is Exodeoxyribonuclease 7 small subunit.